The chain runs to 198 residues: Na(+)-translocating NADH-quinone reductase subunit E (198 aa).

Helical transmembrane passes span 11–31 (SVFIENMALSFFLGMCTFLAV), 35–55 (VSTAFGLGIAVIVVLGIAVPV), 77–97 (FLNFITFIGVIAALVQILEMV), 110–130 (GIFLPLITVNCAIFGGVSFMV), 140–160 (VVYGIGAGTGWMLAIVALAGI), and 176–196 (LGITFITVGLMALGFMSFSGI).

Belongs to the NqrDE/RnfAE family. As to quaternary structure, composed of six subunits; NqrA, NqrB, NqrC, NqrD, NqrE and NqrF.

The protein localises to the cell inner membrane. It catalyses the reaction a ubiquinone + n Na(+)(in) + NADH + H(+) = a ubiquinol + n Na(+)(out) + NAD(+). Functionally, NQR complex catalyzes the reduction of ubiquinone-1 to ubiquinol by two successive reactions, coupled with the transport of Na(+) ions from the cytoplasm to the periplasm. NqrA to NqrE are probably involved in the second step, the conversion of ubisemiquinone to ubiquinol. In Pasteurella multocida (strain Pm70), this protein is Na(+)-translocating NADH-quinone reductase subunit E.